Here is a 350-residue protein sequence, read N- to C-terminus: Small ribosomal subunit biogenesis GTPase RsgA (350 aa).

Residues 1–17 (MSKNKLSKGQQRRVNAN) are compositionally biased toward polar residues. The segment at 1-33 (MSKNKLSKGQQRRVNANHQRRLKTSKEKPDYDD) is disordered. The region spanning 104–273 (TSVLTRPDFY…VIDSPGVREF (170 aa)) is the CP-type G domain. GTP-binding positions include 160–163 (NKID) and 214–222 (GQSGVGKSS). Residues cysteine 297, cysteine 302, histidine 304, and cysteine 310 each coordinate Zn(2+).

This sequence belongs to the TRAFAC class YlqF/YawG GTPase family. RsgA subfamily. Monomer. Associates with 30S ribosomal subunit, binds 16S rRNA. The cofactor is Zn(2+).

Its subcellular location is the cytoplasm. Functionally, one of several proteins that assist in the late maturation steps of the functional core of the 30S ribosomal subunit. Helps release RbfA from mature subunits. May play a role in the assembly of ribosomal proteins into the subunit. Circularly permuted GTPase that catalyzes slow GTP hydrolysis, GTPase activity is stimulated by the 30S ribosomal subunit. In Escherichia coli O6:H1 (strain CFT073 / ATCC 700928 / UPEC), this protein is Small ribosomal subunit biogenesis GTPase RsgA.